The sequence spans 236 residues: Purine nucleoside phosphorylase DeoD-type (236 aa).

H5 contacts a purine D-ribonucleoside. Phosphate is bound by residues G21, R25, R44, and 88–91 (RIGS). Residues 180–182 (EME) and 204–205 (SD) contribute to the a purine D-ribonucleoside site. The Proton donor role is filled by D205.

The protein belongs to the PNP/UDP phosphorylase family. As to quaternary structure, homohexamer; trimer of homodimers.

It catalyses the reaction a purine D-ribonucleoside + phosphate = a purine nucleobase + alpha-D-ribose 1-phosphate. The catalysed reaction is a purine 2'-deoxy-D-ribonucleoside + phosphate = a purine nucleobase + 2-deoxy-alpha-D-ribose 1-phosphate. In terms of biological role, catalyzes the reversible phosphorolytic breakdown of the N-glycosidic bond in the beta-(deoxy)ribonucleoside molecules, with the formation of the corresponding free purine bases and pentose-1-phosphate. This Tolumonas auensis (strain DSM 9187 / NBRC 110442 / TA 4) protein is Purine nucleoside phosphorylase DeoD-type.